The chain runs to 211 residues: Large ribosomal subunit protein uL4 (211 aa).

Over residues 41-53 (QAHSRQGTASTLT) the composition is skewed to polar residues. The tract at residues 41-78 (QAHSRQGTASTLTRAEVRGGGRKPYKQKGTGRARQGTI) is disordered. Residues 60–71 (GGRKPYKQKGTG) are compositionally biased toward basic residues.

This sequence belongs to the universal ribosomal protein uL4 family. As to quaternary structure, part of the 50S ribosomal subunit.

One of the primary rRNA binding proteins, this protein initially binds near the 5'-end of the 23S rRNA. It is important during the early stages of 50S assembly. It makes multiple contacts with different domains of the 23S rRNA in the assembled 50S subunit and ribosome. Its function is as follows. Forms part of the polypeptide exit tunnel. The protein is Large ribosomal subunit protein uL4 of Prochlorococcus marinus (strain MIT 9303).